The sequence spans 439 residues: Lipase 1 (439 aa).

A signal peptide spans 1–24 (MRCSLRMQLLLLLGLCVFISRIQG). The interval 28–60 (GGEEDEEDEEEEEEEEESVEDETPEDRLQRKNI) is disordered. The segment covering 29–51 (GEEDEEDEEEEEEEEESVEDETP) has biased composition (acidic residues). N124 and N151 each carry an N-linked (GlcNAc...) asparagine glycan. Catalysis depends on S197, which acts as the Charge relay system. N-linked (GlcNAc...) asparagine glycosylation is found at N346 and N379. H393 (charge relay system) is an active-site residue. The N-linked (GlcNAc...) asparagine glycan is linked to N426.

Belongs to the AB hydrolase superfamily. Lipase family. As to expression, in 14 hours embryos expression is seen in the foregut/midgut boundary.

It localises to the secreted. Its function is as follows. Could be a digestive enzyme. This chain is Lipase 1 (Lip1), found in Drosophila melanogaster (Fruit fly).